The sequence spans 435 residues: Histidine--tRNA ligase (435 aa).

This sequence belongs to the class-II aminoacyl-tRNA synthetase family. In terms of assembly, homodimer.

Its subcellular location is the cytoplasm. The enzyme catalyses tRNA(His) + L-histidine + ATP = L-histidyl-tRNA(His) + AMP + diphosphate + H(+). The chain is Histidine--tRNA ligase from Synechococcus elongatus (strain ATCC 33912 / PCC 7942 / FACHB-805) (Anacystis nidulans R2).